We begin with the raw amino-acid sequence, 377 residues long: Peptidyl-prolyl cis-trans isomerase D (377 aa).

The 168-residue stretch at 11-178 (YFDIQIGSQK…TDVTIVDCGE (168 aa)) folds into the PPIase cyclophilin-type domain. TPR repeat units lie at residues 220-253 (ASEL…LNEF), 273-306 (FTLH…ADAA), and 314-347 (AKAY…APGD).

This sequence belongs to the cyclophilin-type PPIase family. PPIase D subfamily.

The protein resides in the cytoplasm. The catalysed reaction is [protein]-peptidylproline (omega=180) = [protein]-peptidylproline (omega=0). Functionally, PPIases accelerate the folding of proteins. It catalyzes the cis-trans isomerization of proline imidic peptide bonds in oligopeptides. In Aspergillus fumigatus (strain ATCC MYA-4609 / CBS 101355 / FGSC A1100 / Af293) (Neosartorya fumigata), this protein is Peptidyl-prolyl cis-trans isomerase D (cpr6).